The chain runs to 459 residues: Probable PTS system sucrose-specific EIIBC component (459 aa).

The PTS EIIB type-1 domain occupies 1 to 86; the sequence is MHKEIAKELL…VHVWETAPSE (86 aa). The Phosphocysteine intermediate; for EIIB activity role is filled by C25. Positions 106 to 459 constitute a PTS EIIC type-1 domain; that stretch reads KTLSDIFVPI…LFLGFKEETE (354 aa). The next 11 helical transmembrane spans lie at 111–131, 147–167, 177–197, 209–229, 245–265, 288–308, 329–349, 360–380, 388–408, 412–432, and 434–454; these read IFVP…LIGM, MLDL…GFSA, LGAV…SMLG, LHIP…SVFV, LDVV…ALIV, AGIA…LSGL, FLVP…LAVF, IALP…VFGV, FIGA…VQVV, YGLT…ANFV, and YMIG…FLGF.

It is found in the cell membrane. In terms of biological role, the phosphoenolpyruvate-dependent sugar phosphotransferase system (sugar PTS), a major carbohydrate active -transport system, catalyzes the phosphorylation of incoming sugar substrates concomitantly with their translocation across the cell membrane. This system may be involved in sucrose transport. The EIIB domain is mainly phosphorylated by the EIIA domains of GamP and PtsA/YpqE. Functionally, negatively regulates SacY activity by catalyzing its phosphorylation on 'His-99'. The chain is Probable PTS system sucrose-specific EIIBC component (sacX) from Bacillus subtilis (strain 168).